We begin with the raw amino-acid sequence, 338 residues long: Phosphate acyltransferase (338 aa).

It belongs to the PlsX family. In terms of assembly, homodimer. Probably interacts with PlsY.

It localises to the cytoplasm. It carries out the reaction a fatty acyl-[ACP] + phosphate = an acyl phosphate + holo-[ACP]. It functions in the pathway lipid metabolism; phospholipid metabolism. Functionally, catalyzes the reversible formation of acyl-phosphate (acyl-PO(4)) from acyl-[acyl-carrier-protein] (acyl-ACP). This enzyme utilizes acyl-ACP as fatty acyl donor, but not acyl-CoA. The protein is Phosphate acyltransferase of Gloeobacter violaceus (strain ATCC 29082 / PCC 7421).